The chain runs to 98 residues: MEKRTPHTRLSQVKKLVNAGQVRTTRSALLNADELGLDFDGMCNVIIGLSESDFYKSMTTYSDHTIWQDVYRPRLVTGQVYLKITVIHDVLIVSFKEK.

Might be a dimer. Also reported to be a monomer. Crystallizes as a heterotetramer with MqsA, MqsR-MqsA(2)-MqsR. Purifies as a possible heterohexamer of 2 MqsR dimers and 1 MqsA dimer. When the 2 dissociate the MsqR mRNA interferase becomes active.

Functionally, toxic component of a type II toxin-antitoxin (TA) system. Plays a significant role in the control of biofilm formation and induction of persister cells in the presence of antibiotics. An mRNA interferase which has been reported to be translation-independent. It has also been reported to be translation-dependent. Cleavage has been reported to occur on either side of G in the sequence GCU. Also reported to cleave after C in GC(A/U) sequences. There are only 14 genes in E.coli W3110 (and probably also MG1655) that do not have a GCU sequence and thus are resistant to the mRNA interferase activity; among these is the gene for toxin GhoT. Overexpression of MqsR causes cessation of cell growth and inhibits cell proliferation via inhibition of translation as well as increasing persister cell formation; these effects are overcome by concomitant or subsequent expression of antitoxin MqsA. Cross-talk can occur between different TA systems. Ectopic expression of this toxin induces transcription of the relBEF TA system operon with specific cleavage of the relBEF mRNA produced. Regulates the expression of GhoT/GhoS, a type V TA system. Persistence depends on toxin GhoT activity, which MqsR controls at the post-transcriptional level by selectively degrading the antitoxin ghoS segment of the ghoST mRNA. Overexpression leads to a dramatic increase in tolerance to the antibiotic ofloxacin. This TA system mediates cell growth during bile acid deoxycholate stress by degrading mRNA for probable deoxycholate-binding protein YgiS; bile acid detergents such as deoxycholate are important for host defense against bacterial growth in the gall bladder and duodenum. In terms of biological role, initially reported to act as a cotranscription factor with MqsA. Following further experiments, the MqsR-MqsA complex does not bind DNA and all reported data are actually due to a small fraction of free MqsA alone binding DNA. Addition of MqsR to a preformed MqsA-promoter DNA complex causes dissociation of the MqsA-DNA complex, probably causing derepression of MqsA-repressed transcripts. Does not bind DNA in the presence or absence of MqsA. This is mRNA interferase toxin MqsR from Escherichia coli (strain K12).